A 344-amino-acid polypeptide reads, in one-letter code: Coproporphyrin III ferrochelatase (344 aa).

Ser-52 is a binding site for Fe-coproporphyrin III. [2Fe-2S] cluster is bound at residue Cys-113. Fe-coproporphyrin III is bound at residue Tyr-116. Residues His-172 and Glu-255 each contribute to the Fe(2+) site. [2Fe-2S] cluster-binding residues include Cys-316, Cys-325, and Cys-330.

This sequence belongs to the ferrochelatase family. [2Fe-2S] cluster serves as cofactor.

It localises to the cytoplasm. It catalyses the reaction Fe-coproporphyrin III + 2 H(+) = coproporphyrin III + Fe(2+). It functions in the pathway porphyrin-containing compound metabolism; protoheme biosynthesis. Involved in coproporphyrin-dependent heme b biosynthesis. Catalyzes the insertion of ferrous iron into coproporphyrin III to form Fe-coproporphyrin III. The polypeptide is Coproporphyrin III ferrochelatase (Mycobacterium bovis (strain ATCC BAA-935 / AF2122/97)).